We begin with the raw amino-acid sequence, 484 residues long: Poly(A) polymerase alpha-B (484 aa).

Residues 240-257 carry the Nuclear localization signal 1 motif; the sequence is RKQLHQLLPSHVLPKKKK. 3 disordered regions span residues 276-314, 326-356, and 375-484; these read SVDS…PVSL, VPQN…SSTP, and KPVT…RLNR. The Nuclear localization signal 2 signature appears at 392-407; that stretch reads KRTSSPTNEESPKKTK. Over residues 423 to 441 the composition is skewed to basic and acidic residues; sequence EQNKLEPEELKEVHSEEKS. Over residues 451-464 the composition is skewed to low complexity; the sequence is SSQRSSSTDLSDIS.

It belongs to the poly(A) polymerase family. Monomer.

It localises to the nucleus. It catalyses the reaction RNA(n) + ATP = RNA(n)-3'-adenine ribonucleotide + diphosphate. Functionally, polymerase that creates the 3'-poly(A) tail of mRNA's. May acquire specificity through interaction with a cleavage and polyadenylation factor (CPSF). This chain is Poly(A) polymerase alpha-B (papola-b), found in Xenopus laevis (African clawed frog).